We begin with the raw amino-acid sequence, 322 residues long: Eukaryotic translation initiation factor 3 subunit I (322 aa).

WD repeat units lie at residues 4 to 43 (GHER…RLGT), 46 to 85 (GHQG…VIAS), 141 to 180 (MVES…KVVD), 184 to 223 (DHTA…CLKT), and 281 to 322 (GHFG…NIFE).

Belongs to the eIF-3 subunit I family. As to quaternary structure, component of the eukaryotic translation initiation factor 3 (eIF-3) complex. The eIF-3 complex interacts with pix.

Its subcellular location is the cytoplasm. Component of the eukaryotic translation initiation factor 3 (eIF-3) complex, which is involved in protein synthesis of a specialized repertoire of mRNAs and, together with other initiation factors, stimulates binding of mRNA and methionyl-tRNAi to the 40S ribosome. The eIF-3 complex specifically targets and initiates translation of a subset of mRNAs involved in cell proliferation. This chain is Eukaryotic translation initiation factor 3 subunit I, found in Drosophila mojavensis (Fruit fly).